The following is a 163-amino-acid chain: Ribosome maturation factor RimM (163 aa).

In terms of domain architecture, PRC barrel spans 94-162; sequence ADEYYYIDLI…DHLVIAADFI (69 aa).

Belongs to the RimM family. In terms of assembly, binds ribosomal protein uS19.

The protein resides in the cytoplasm. An accessory protein needed during the final step in the assembly of 30S ribosomal subunit, possibly for assembly of the head region. Essential for efficient processing of 16S rRNA. May be needed both before and after RbfA during the maturation of 16S rRNA. It has affinity for free ribosomal 30S subunits but not for 70S ribosomes. The sequence is that of Ribosome maturation factor RimM from Zymomonas mobilis subsp. mobilis (strain ATCC 31821 / ZM4 / CP4).